A 242-amino-acid chain; its full sequence is Tryptophan synthase alpha chain (242 aa).

Residues Glu-32 and Asp-43 each act as proton acceptor in the active site.

The protein belongs to the TrpA family. Tetramer of two alpha and two beta chains.

The protein resides in the plastid. Its subcellular location is the chloroplast. It carries out the reaction (1S,2R)-1-C-(indol-3-yl)glycerol 3-phosphate + L-serine = D-glyceraldehyde 3-phosphate + L-tryptophan + H2O. The protein operates within amino-acid biosynthesis; L-tryptophan biosynthesis; L-tryptophan from chorismate: step 5/5. In terms of biological role, the alpha subunit is responsible for the aldol cleavage of indoleglycerol phosphate to indole and glyceraldehyde 3-phosphate. The sequence is that of Tryptophan synthase alpha chain from Cyanidium caldarium (Red alga).